The following is a 394-amino-acid chain: Carbamoyl phosphate synthase small chain (394 aa).

The segment at 1–188 (MIRKERAILA…ALPYAFPTLR (188 aa)) is CPSase. L-glutamine contacts are provided by Ser49, Gly240, and Gly242. Residues 192 to 379 (RVVLMDFGIK…IEEIDAFDGG (188 aa)) form the Glutamine amidotransferase type-1 domain. The Nucleophile role is filled by Cys267. Residues Leu268, Gln271, Asn309, Gly311, and Tyr312 each coordinate L-glutamine. Catalysis depends on residues His352 and Glu354.

It belongs to the CarA family. Composed of two chains; the small (or glutamine) chain promotes the hydrolysis of glutamine to ammonia, which is used by the large (or ammonia) chain to synthesize carbamoyl phosphate. Tetramer of heterodimers (alpha,beta)4.

It catalyses the reaction hydrogencarbonate + L-glutamine + 2 ATP + H2O = carbamoyl phosphate + L-glutamate + 2 ADP + phosphate + 2 H(+). The enzyme catalyses L-glutamine + H2O = L-glutamate + NH4(+). It participates in amino-acid biosynthesis; L-arginine biosynthesis; carbamoyl phosphate from bicarbonate: step 1/1. The protein operates within pyrimidine metabolism; UMP biosynthesis via de novo pathway; (S)-dihydroorotate from bicarbonate: step 1/3. Functionally, small subunit of the glutamine-dependent carbamoyl phosphate synthetase (CPSase). CPSase catalyzes the formation of carbamoyl phosphate from the ammonia moiety of glutamine, carbonate, and phosphate donated by ATP, constituting the first step of 2 biosynthetic pathways, one leading to arginine and/or urea and the other to pyrimidine nucleotides. The small subunit (glutamine amidotransferase) binds and cleaves glutamine to supply the large subunit with the substrate ammonia. The protein is Carbamoyl phosphate synthase small chain of Deinococcus radiodurans (strain ATCC 13939 / DSM 20539 / JCM 16871 / CCUG 27074 / LMG 4051 / NBRC 15346 / NCIMB 9279 / VKM B-1422 / R1).